Here is a 252-residue protein sequence, read N- to C-terminus: Large ribosomal subunit protein uL29m (252 aa).

Residues 1–39 (MSTSTVIRPVARSLLQLRKAGNTPPAFLLPCLQSSSTTS) constitute a mitochondrion transit peptide. A compositionally biased stretch (acidic residues) spans 233–242 (EDVLAEAEGE). The disordered stretch occupies residues 233 to 252 (EDVLAEAEGEAEPKPAQVTA).

This sequence belongs to the universal ribosomal protein uL29 family. Component of the mitochondrial large ribosomal subunit. Mature mitochondrial ribosomes consist of a small (37S) and a large (54S) subunit. The 37S subunit contains at least 33 different proteins and 1 molecule of RNA (15S). The 54S subunit contains at least 45 different proteins and 1 molecule of RNA (21S).

Its subcellular location is the mitochondrion. This chain is Large ribosomal subunit protein uL29m (mrpl4), found in Botryotinia fuckeliana (strain B05.10) (Noble rot fungus).